The primary structure comprises 591 residues: 2-succinyl-5-enolpyruvyl-6-hydroxy-3-cyclohexene-1-carboxylate synthase (591 aa).

Belongs to the TPP enzyme family. MenD subfamily. In terms of assembly, homodimer. Mg(2+) serves as cofactor. It depends on Mn(2+) as a cofactor. The cofactor is thiamine diphosphate.

It catalyses the reaction isochorismate + 2-oxoglutarate + H(+) = 5-enolpyruvoyl-6-hydroxy-2-succinyl-cyclohex-3-ene-1-carboxylate + CO2. It functions in the pathway quinol/quinone metabolism; 1,4-dihydroxy-2-naphthoate biosynthesis; 1,4-dihydroxy-2-naphthoate from chorismate: step 2/7. Its pathway is quinol/quinone metabolism; menaquinone biosynthesis. Catalyzes the thiamine diphosphate-dependent decarboxylation of 2-oxoglutarate and the subsequent addition of the resulting succinic semialdehyde-thiamine pyrophosphate anion to isochorismate to yield 2-succinyl-5-enolpyruvyl-6-hydroxy-3-cyclohexene-1-carboxylate (SEPHCHC). The protein is 2-succinyl-5-enolpyruvyl-6-hydroxy-3-cyclohexene-1-carboxylate synthase of Salinibacter ruber (strain DSM 13855 / M31).